A 706-amino-acid chain; its full sequence is Double-strand break repair protein MRE11 (706 aa).

Ser2 carries the N-acetylserine modification. The residue at position 2 (Ser2) is a Phosphoserine. Mn(2+) is bound by residues Asp20, His22, and Asp60. An interaction with NBN region spans residues 87–117; sequence RPVQFEVISDQSVNFGFSKFPWVNYQDGNLN. Residue Asn128 participates in Mn(2+) binding. The active-site Proton donor is His129. Residues His217, His245, and His247 each contribute to the Mn(2+) site. A Glycyl lysine isopeptide (Lys-Gly) (interchain with G-Cter in SUMO2) cross-link involves residue Lys255. Ser275 is subject to Phosphoserine. Lys282 is covalently cross-linked (Glycyl lysine isopeptide (Lys-Gly) (interchain with G-Cter in UFM1)). Lys339 is covalently cross-linked (Glycyl lysine isopeptide (Lys-Gly) (interchain with G-Cter in ubiquitin)). Residues Lys384 and Lys468 each participate in a glycyl lysine isopeptide (Lys-Gly) (interchain with G-Cter in SUMO) cross-link. Lys481 is covalently cross-linked (Glycyl lysine isopeptide (Lys-Gly) (interchain with G-Cter in ubiquitin)). The span at 505-514 shows a compositional bias: basic and acidic residues; it reads FRESRQRNTN. The segment at 505–706 is disordered; the sequence is FRESRQRNTN…SSSCPRRNRR (202 aa). Over residues 531–541 the composition is skewed to polar residues; it reads RSQSETSTSAF. Residues 569 to 579 are compositionally biased toward basic residues; sequence GRGRGRGRRGA. Asymmetric dimethylarginine occurs at positions 570, 572, 574, 576, 577, 580, 587, 592, and 594. Positions 570–594 match the GAR motif; it reads RGRGRGRRGARGQSSAPRGGSQRGR. The segment covering 580–589 has biased composition (low complexity); sequence RGQSSAPRGG. Positions 603–617 are enriched in polar residues; sequence RGRSSKATSSTSRNM. Phosphoserine is present on residues Ser618, Ser640, and Ser648. Residues 643–653 show a composition bias toward acidic residues; that stretch reads IEVDDSDEDDI. Positions 655 to 679 are enriched in polar residues; it reads PTNSRADQRWSGTTSSKRMSQSQTA. N6-lactoyllysine is present on Lys671. Phosphoserine is present on residues Ser674, Ser676, Ser686, and Ser699. The segment covering 684 to 694 has biased composition (acidic residues); that stretch reads FESDEDDDDDP.

Belongs to the MRE11/RAD32 family. In terms of assembly, component of the MRN complex composed of two heterodimers RAD50 and MRE11 associated with a single NBN. The MRN complexes dimerize on DNA to form joined MRN-MRN oligomers required for DNA double-strand break repair. As part of the MRN complex, interacts with MCM9; the interaction recruits the complex to DNA repair sites. Component of the BASC complex, at least composed of BRCA1, MSH2, MSH6, MLH1, ATM, BLM, RAD50, MRE11 and NBN. Found in a complex with TERF2. Interacts with DCLRE1C/Artemis and DCLRE1B/Apollo. Interacts with ATF2. Interacts with EXD2. Interacts with MRNIP. Interacts with SAMHD1; leading to stimulate 3'-5' exonuclease activity. Interacts (when ubiquitinated) with UBQLN4 (via its UBA domain). Interacts with CYREN (via XLF motif). Interacts with GFI1; promoting methylation by PRMT1. Interacts with DYNLL1; inhibiting the activity of MRE11. Interacts with C1QBP and RAD50; interaction takes place in absence of DNA damage to form the MRC (MRE11-RAD50-C1QBP) complex that inhibits the activity of MRE11. Interacts with AGER/RAGE; AGER is recruited to DNA double-strand break sites where it enhances MRE11 endonuclease activity to promote DNA repair. It depends on Mn(2+) as a cofactor. Post-translationally, phosphorylated by ATM at Ser-674 and Ser-676 in response to DNA damage, promoting MRE11 activity: phosphorylation activates MRE11 by preventing the interaction between MRE11 and the C1QBP inhibitor. Phosphorylation at Ser-648 by PLK1 primes for phosphorylation at Ser-686 by CK2, inhibiting recruitment of the MRN complex to DNA damage sites. In terms of processing, asymmetric dimethylation by PRMT1 promotes MRE11 exonuclease activity. Lactylation at Lys-671 by CREBBP/CBP in response to DNA damage promotes DNA binding and MRE11 activity. Post-translationally, acetylated on lysine residues by KAT2A /GCN5. In terms of processing, ubiquitinated following DNA damage. Ubiquitination triggers interaction with UBQLN4, leading to MRE11 removal from chromatin and degradation by the proteasome. Ubiquitinated at Lys-339 and Lys-481 by RNF126 via 'Lys-27'- and 'Lys-29'-linked polyubiquitin chains, promoting the exonuclease activity of MRE11. SUMOylated by PIAS1, stabilizing MRE11 on chromatin during end resection. DeSUMOylated by SENP3 following removal from DNA double-strand breaks (DSBs). Post-translationally, ufmylation at Lys-282 promotes MRE11 activity and is required for activation of the ATM and ATR kinases by the MRN complex.

The protein resides in the nucleus. Its subcellular location is the chromosome. It localises to the telomere. Interaction with SAMHD1 stimulates the double-strand-specific 3'-5' exonuclease activity. RBBP8/CtIP specifically promotes the endonuclease activity to clear protein-DNA adducts and generate clean double-strand break ends. DYNLL1-binding inhibits the activity of MRE11. MRE11 activity is inhibited by C1QBP: in absence of DNA damage, C1QBP interacts with unphosphorylated MRE11, preventing formation and activity of the MRN complex. Its function is as follows. Core component of the MRN complex, which plays a central role in double-strand break (DSB) repair, DNA recombination, maintenance of telomere integrity and meiosis. The MRN complex is involved in the repair of DNA double-strand breaks (DSBs) via homologous recombination (HR), an error-free mechanism which primarily occurs during S and G2 phases. The complex (1) mediates the end resection of damaged DNA, which generates proper single-stranded DNA, a key initial steps in HR, and is (2) required for the recruitment of other repair factors and efficient activation of ATM and ATR upon DNA damage. Within the MRN complex, MRE11 possesses both single-strand endonuclease activity and double-strand-specific 3'-5' exonuclease activity. After DSBs, MRE11 is loaded onto DSBs sites and cleaves DNA by cooperating with RBBP8/CtIP to initiate end resection. MRE11 first endonucleolytically cleaves the 5' strand at DNA DSB ends to prevent non-homologous end joining (NHEJ) and licence HR. It then generates a single-stranded DNA gap via 3' to 5' exonucleolytic degradation to create entry sites for EXO1- and DNA2-mediated 5' to 3' long-range resection, which is required for single-strand invasion and recombination. RBBP8/CtIP specifically promotes the endonuclease activity of MRE11 to clear protein-DNA adducts and generate clean double-strand break ends. MRE11 endonuclease activity is also enhanced by AGER/RAGE. The MRN complex is also required for DNA damage signaling via activation of the ATM and ATR kinases: the nuclease activity of MRE11 is not required to activate ATM and ATR. The MRN complex is also required for the processing of R-loops. The MRN complex is involved in the activation of the cGAS-STING pathway induced by DNA damage during tumorigenesis: the MRN complex acts by displacing CGAS from nucleosome sequestration, thereby activating it. In telomeres the MRN complex may modulate t-loop formation. The polypeptide is Double-strand break repair protein MRE11 (Mus musculus (Mouse)).